We begin with the raw amino-acid sequence, 405 residues long: Replication factor C large subunit (405 aa).

Glycine 47 to threonine 54 lines the ATP pocket.

This sequence belongs to the activator 1 small subunits family. RfcL subfamily. In terms of assembly, heteromultimer composed of small subunits (RfcS) and large subunits (RfcL).

Functionally, part of the RFC clamp loader complex which loads the PCNA sliding clamp onto DNA. This chain is Replication factor C large subunit, found in Saccharolobus islandicus (strain L.S.2.15 / Lassen #1) (Sulfolobus islandicus).